The primary structure comprises 498 residues: NADP-dependent glyceraldehyde-3-phosphate dehydrogenase (498 aa).

Residues arginine 118 and 171–172 each bind substrate; that span reads NY. The NADP(+) site is built by lysine 194, threonine 197, and aspartate 232. An NAD(+)-binding site is contributed by 247 to 251; sequence GGDTG. Glutamate 266 (proton acceptor) is an active-site residue. 299–301 contacts substrate; the sequence is RCT. Residue cysteine 300 is the Nucleophile of the active site. Glutamate 393 lines the NADP(+) pocket. Arginine 453 provides a ligand contact to substrate.

Belongs to the aldehyde dehydrogenase family.

The protein localises to the cytoplasm. It catalyses the reaction D-glyceraldehyde 3-phosphate + NADP(+) + H2O = (2R)-3-phosphoglycerate + NADPH + 2 H(+). Its function is as follows. Important as a means of generating NADPH for biosynthetic reactions. The chain is NADP-dependent glyceraldehyde-3-phosphate dehydrogenase (GPN1) from Zea mays (Maize).